The sequence spans 151 residues: Small ribosomal subunit protein uS15 (151 aa).

The protein belongs to the universal ribosomal protein uS15 family. In terms of assembly, component of the small ribosomal subunit.

The protein resides in the cytoplasm. In terms of biological role, component of the small ribosomal subunit. The ribosome is a large ribonucleoprotein complex responsible for the synthesis of proteins in the cell. The sequence is that of Small ribosomal subunit protein uS15 (rps13) from Xenopus laevis (African clawed frog).